We begin with the raw amino-acid sequence, 104 residues long: uncharacterized protein (104 aa).

This is an uncharacterized protein from Bacillus subtilis (strain 168).